A 512-amino-acid polypeptide reads, in one-letter code: MTQTIQTQTGKNSGAGRTYEVRTFGCQMNVHDSERLSGLLEDSGYVPASEGVTPDVVVFNTCAVRENADKRLYGTLGQMKAIKDEHPGMQIAVGGCMAQKDKQTVVDKAPWVDVVFGTHNLGSLPTLLERSAHNHKAEVEIFDALEEFPSVLPAKRESAYAGWVSVSVGCNNTCTFCIVPSLRGKEQDRRPGEILAEVKALVEQGVSEVTLLGQNVNAYGVNFADETLERDRTAFSKLLRACGEIEGLERLRFTSPHPAEFTDDVIDAMAETPAVCPQLHMPLQSGSDKVLKDMKRSYRSKKFLAILDKVRERIPHAAITTDIIVGFPGETEEDFQATLDVVEKARFSSAFTFQYSPRPGTPAAEMENQVPKAVVQDRYERLLALQERISEEENRKLIGTTQELLVQADGRKNDRTQRRSGRSRDGRLVHFTPEGDVRAGDVVEVVITDAAPHFLIADGGVASHRRTRAGDMTELGETPTTAPVGVGLGMPSIKKPEPTTAGGCSTGGCGCE.

Residues 17–133 (RTYEVRTFGC…LPTLLERSAH (117 aa)) enclose the MTTase N-terminal domain. Residues cysteine 26, cysteine 62, cysteine 96, cysteine 170, cysteine 174, and cysteine 177 each contribute to the [4Fe-4S] cluster site. Residues 156-392 (RESAYAGWVS…LALQERISEE (237 aa)) enclose the Radical SAM core domain. In terms of domain architecture, TRAM spans 395–461 (RKLIGTTQEL…PHFLIADGGV (67 aa)). Residues 473-512 (TELGETPTTAPVGVGLGMPSIKKPEPTTAGGCSTGGCGCE) form a disordered region.

Belongs to the methylthiotransferase family. MiaB subfamily. Monomer. It depends on [4Fe-4S] cluster as a cofactor.

It is found in the cytoplasm. It carries out the reaction N(6)-dimethylallyladenosine(37) in tRNA + (sulfur carrier)-SH + AH2 + 2 S-adenosyl-L-methionine = 2-methylsulfanyl-N(6)-dimethylallyladenosine(37) in tRNA + (sulfur carrier)-H + 5'-deoxyadenosine + L-methionine + A + S-adenosyl-L-homocysteine + 2 H(+). Its function is as follows. Catalyzes the methylthiolation of N6-(dimethylallyl)adenosine (i(6)A), leading to the formation of 2-methylthio-N6-(dimethylallyl)adenosine (ms(2)i(6)A) at position 37 in tRNAs that read codons beginning with uridine. In Corynebacterium jeikeium (strain K411), this protein is tRNA-2-methylthio-N(6)-dimethylallyladenosine synthase.